The chain runs to 211 residues: Large ribosomal subunit protein uL4 (211 aa).

Residues 42-87 (AHMRQGTASTLTRSEVRGGGRKPYKQKGTGRARQGSVRTPLRPGGG) form a disordered region. A compositionally biased stretch (basic residues) spans 60 to 71 (GGRKPYKQKGTG).

Belongs to the universal ribosomal protein uL4 family. In terms of assembly, part of the 50S ribosomal subunit.

One of the primary rRNA binding proteins, this protein initially binds near the 5'-end of the 23S rRNA. It is important during the early stages of 50S assembly. It makes multiple contacts with different domains of the 23S rRNA in the assembled 50S subunit and ribosome. In terms of biological role, forms part of the polypeptide exit tunnel. This is Large ribosomal subunit protein uL4 from Synechococcus sp. (strain CC9902).